The primary structure comprises 225 residues: ATP synthase F(0) complex subunit a (225 aa).

6 consecutive transmembrane segments (helical) span residues 10–30 (PSLL…ILLL), 69–89 (LILI…LLPY), 96–116 (QLSM…LIGL), 135–155 (LLIP…PIAL), 168–188 (LLIQ…PPLS), and 194–214 (VLIL…YVFV).

It belongs to the ATPase A chain family. Component of the ATP synthase complex composed at least of ATP5F1A/subunit alpha, ATP5F1B/subunit beta, ATP5MC1/subunit c (homooctomer), MT-ATP6/subunit a, MT-ATP8/subunit 8, ATP5ME/subunit e, ATP5MF/subunit f, ATP5MG/subunit g, ATP5MK/subunit k, ATP5MJ/subunit j, ATP5F1C/subunit gamma, ATP5F1D/subunit delta, ATP5F1E/subunit epsilon, ATP5PF/subunit F6, ATP5PB/subunit b, ATP5PD/subunit d, ATP5PO/subunit OSCP. ATP synthase complex consists of a soluble F(1) head domain (subunits alpha(3) and beta(3)) - the catalytic core - and a membrane F(0) domain - the membrane proton channel (subunits c, a, 8, e, f, g, k and j). These two domains are linked by a central stalk (subunits gamma, delta, and epsilon) rotating inside the F1 region and a stationary peripheral stalk (subunits F6, b, d, and OSCP). Interacts with DNAJC30; interaction is direct.

The protein localises to the mitochondrion inner membrane. It catalyses the reaction H(+)(in) = H(+)(out). In terms of biological role, subunit a, of the mitochondrial membrane ATP synthase complex (F(1)F(0) ATP synthase or Complex V) that produces ATP from ADP in the presence of a proton gradient across the membrane which is generated by electron transport complexes of the respiratory chain. ATP synthase complex consist of a soluble F(1) head domain - the catalytic core - and a membrane F(1) domain - the membrane proton channel. These two domains are linked by a central stalk rotating inside the F(1) region and a stationary peripheral stalk. During catalysis, ATP synthesis in the catalytic domain of F(1) is coupled via a rotary mechanism of the central stalk subunits to proton translocation. With the subunit c (ATP5MC1), forms the proton-conducting channel in the F(0) domain, that contains two crucial half-channels (inlet and outlet) that facilitate proton movement from the mitochondrial intermembrane space (IMS) into the matrix. Protons are taken up via the inlet half-channel and released through the outlet half-channel, following a Grotthuss mechanism. The sequence is that of ATP synthase F(0) complex subunit a from Alligator mississippiensis (American alligator).